Here is a 470-residue protein sequence, read N- to C-terminus: E3 ubiquitin-protein ligase TRIM21 (470 aa).

The segment at 20-59 adopts an RING-type zinc-finger fold; sequence CSICLDPMVEPMSIECGHCFCKECIFEVGKNGGSSCPECR. Positions 96, 99, 118, and 124 each coordinate Zn(2+). The B box-type zinc-finger motif lies at 96–127; the sequence is CMKHGEKLHLFCEEDGQALCWVCAQSGKHRDH. The stretch at 188–250 forms a coiled coil; that stretch reads LQNSLLAQEE…RGSELELLQE (63 aa). Residues 272 to 470 form the B30.2/SPRY domain; the sequence is DLTSTCPVPG…APLKLCPLKM (199 aa).

This sequence belongs to the TRIM/RBCC family. As to quaternary structure, homotrimer. Component of a SCF(SKP2)-like complex containing CUL1, SKP1, TRIM21 and SKP2. Interacts with CALR, CUL1, FBXW11, HSPA5, IKBKB, IRF3, SKP1 and VCP. Interacts with SKP2; the interaction with SKP2 does not depend on an intact F-box domain. Interacts (via N-terminus and C-terminus) with DCP2 (via N-terminus and C-terminus). Interacts (via C-terminus) with IRF8 (via C-terminus). Interacts with ULK1, BECN1 and with ATG8 family members, including GABARAP, GABARAPL1, GABARAPL2 and MAP1LC3C/LC3C. Interacts with TRIM21 and SQSTM1/sequestosome 1. Interacts with IRF3. Interacts (via the SPRY domain) with NMI (via coiled-coil domain); the interaction promotes 'Lys-63'-linked ubiquitination of NMI. Interacts with IFI35 and NMI; the interaction facilitates NMI-IFI35 complex formation. Post-translationally, autoubiquitinated; does not lead to its proteasomal degradation. Deubiquitinated by USP4; leading to its stabilization. Autoubiquitinated.

It is found in the cytoplasm. The protein localises to the cytoplasmic vesicle. Its subcellular location is the autophagosome. It localises to the nucleus. The protein resides in the P-body. It is found in the stress granule. It carries out the reaction S-ubiquitinyl-[E2 ubiquitin-conjugating enzyme]-L-cysteine + [acceptor protein]-L-lysine = [E2 ubiquitin-conjugating enzyme]-L-cysteine + N(6)-ubiquitinyl-[acceptor protein]-L-lysine.. Its pathway is protein modification; protein ubiquitination. Functionally, E3 ubiquitin-protein ligase whose activity is dependent on E2 enzymes, UBE2D1, UBE2D2, UBE2E1 and UBE2E2. Forms a ubiquitin ligase complex in cooperation with the E2 UBE2D2 that is used not only for the ubiquitination of USP4 and IKBKB but also for its self-ubiquitination. Component of cullin-RING-based SCF (SKP1-CUL1-F-box protein) E3 ubiquitin-protein ligase complexes such as SCF(SKP2)-like complexes. A TRIM21-containing SCF(SKP2)-like complex is shown to mediate ubiquitination of CDKN1B ('Thr-187' phosphorylated-form), thereby promoting its degradation by the proteasome. Monoubiquitinates IKBKB that will negatively regulates Tax-induced NF-kappa-B signaling. Negatively regulates IFN-beta production post-pathogen recognition by catalyzing polyubiquitin-mediated degradation of IRF3. Mediates the ubiquitin-mediated proteasomal degradation of IgG1 heavy chain, which is linked to the VCP-mediated ER-associated degradation (ERAD) pathway. Promotes IRF8 ubiquitination, which enhanced the ability of IRF8 to stimulate cytokine genes transcription in macrophages. Plays a role in the regulation of the cell cycle progression. Enhances the decapping activity of DCP2. Exists as a ribonucleoprotein particle present in all mammalian cells studied and composed of a single polypeptide and one of four small RNA molecules. At least two isoforms are present in nucleated and red blood cells, and tissue specific differences in RO/SSA proteins have been identified. The common feature of these proteins is their ability to bind HY RNAs.2. Involved in the regulation of innate immunity and the inflammatory response in response to IFNG/IFN-gamma. Organizes autophagic machinery by serving as a platform for the assembly of ULK1, Beclin 1/BECN1 and ATG8 family members and recognizes specific autophagy targets, thus coordinating target recognition with assembly of the autophagic apparatus and initiation of autophagy. Also regulates autophagy through FIP200/RB1CC1 ubiquitination and subsequent decreased protein stability. Represses the innate antiviral response by facilitating the formation of the NMI-IFI35 complex through 'Lys-63'-linked ubiquitination of NMI. During viral infection, promotes cell pyroptosis by mediating 'Lys-6'-linked ubiquitination of ISG12a/IFI27, facilitating its translocation into the mitochondria and subsequent CASP3 activation. When up-regulated through the IFN/JAK/STAT signaling pathway, promotes 'Lys-27'-linked ubiquitination of MAVS, leading to the recruitment of TBK1 and up-regulation of innate immunity. Mediates 'Lys-63'-linked polyubiquitination of G3BP1 in response to heat shock, leading to stress granule disassembly. The sequence is that of E3 ubiquitin-protein ligase TRIM21 (Trim21) from Mus musculus (Mouse).